We begin with the raw amino-acid sequence, 993 residues long: Nisin biosynthesis protein NisB (993 aa).

The chain crosses the membrane as a helical span at residues 838 to 851 (AIFCADSKIIPNLL).

It to B.subtilis SpaB and S.epidermidis EpiB.

The protein localises to the cell membrane. In terms of biological role, involved in the post-translational modification of the lantibiotic nisin. This Lactococcus lactis subsp. lactis (Streptococcus lactis) protein is Nisin biosynthesis protein NisB (nisB).